Consider the following 146-residue polypeptide: Acidic phospholipase A2 2 (146 aa).

An N-terminal signal peptide occupies residues 1 to 21; sequence MTPAHLLILAAVCVSPLGASS. A propeptide spanning residues 22–27 is cleaved from the precursor; sequence SRPMPL. Cystine bridges form between cysteine 38–cysteine 98, cysteine 53–cysteine 145, cysteine 55–cysteine 71, cysteine 70–cysteine 126, cysteine 77–cysteine 119, cysteine 87–cysteine 112, and cysteine 105–cysteine 117. Ca(2+) contacts are provided by tyrosine 54, glycine 56, and glycine 58. Histidine 74 is an active-site residue. Aspartate 75 is a binding site for Ca(2+). Aspartate 120 is an active-site residue.

It belongs to the phospholipase A2 family. Group I subfamily. D49 sub-subfamily. Requires Ca(2+) as cofactor. In terms of tissue distribution, expressed by the venom gland.

The protein localises to the secreted. It catalyses the reaction a 1,2-diacyl-sn-glycero-3-phosphocholine + H2O = a 1-acyl-sn-glycero-3-phosphocholine + a fatty acid + H(+). Functionally, PLA2 catalyzes the calcium-dependent hydrolysis of the 2-acyl groups in 3-sn-phosphoglycerides. This Naja atra (Chinese cobra) protein is Acidic phospholipase A2 2.